Consider the following 348-residue polypeptide: N-acetyl-gamma-glutamyl-phosphate reductase (348 aa).

Residue Cys-149 is part of the active site.

Belongs to the NAGSA dehydrogenase family. Type 1 subfamily.

The protein resides in the cytoplasm. It catalyses the reaction N-acetyl-L-glutamate 5-semialdehyde + phosphate + NADP(+) = N-acetyl-L-glutamyl 5-phosphate + NADPH + H(+). It functions in the pathway amino-acid biosynthesis; L-arginine biosynthesis; N(2)-acetyl-L-ornithine from L-glutamate: step 3/4. Its function is as follows. Catalyzes the NADPH-dependent reduction of N-acetyl-5-glutamyl phosphate to yield N-acetyl-L-glutamate 5-semialdehyde. This Cellvibrio japonicus (strain Ueda107) (Pseudomonas fluorescens subsp. cellulosa) protein is N-acetyl-gamma-glutamyl-phosphate reductase.